The chain runs to 2290 residues: Protein Ycf2 (2290 aa).

ATP is bound at residue 1638-1645 (GSIGTGRS).

This sequence belongs to the Ycf2 family.

Its subcellular location is the plastid. The protein resides in the chloroplast stroma. In terms of biological role, probable ATPase of unknown function. Its presence in a non-photosynthetic plant (Epifagus virginiana) and experiments in tobacco indicate that it has an essential function which is probably not related to photosynthesis. The chain is Protein Ycf2 from Phalaenopsis aphrodite subsp. formosana (Moth orchid).